A 158-amino-acid chain; its full sequence is Snaclec coagulation factor X-activating enzyme light chain 2 (158 aa).

Residues 1–23 (MGRSISVSFGLLAVFLSLSGTGA) form the signal peptide. Disulfide bonds link C27–C38, C55–C152, and C127–C144. A C-type lectin domain is found at 34 to 153 (YRYFCYRVFK…CEEPYPFVCK (120 aa)).

It belongs to the snaclec family. Heterotrimer; disulfide-linked. The heterotrimer consists of 1 heavy chain (a metalloproteinase) and 2 light chains: LC1 and LC2. In terms of tissue distribution, expressed by the venom gland.

It localises to the secreted. In terms of biological role, regulatory subunit of the blood coagulation factor X-activating enzyme. Activates coagulation factor X (F10) by cleaving the Arg-Ile bond at position 234, activates coagulation factor IX (F9) by cleaving the Arg-Val bond at position 226 and is also able to activate protein C (PROC). May serve as an exosite by which the enzyme recognizes and binds to the Gla domain of factor X (F10) in a calcium-dependent manner. This Macrovipera lebetinus (Levantine viper) protein is Snaclec coagulation factor X-activating enzyme light chain 2 (LC2).